The primary structure comprises 430 residues: GTPase Obg (430 aa).

The Obg domain occupies 1 to 158 (MFIDKAKIYL…LTVVLELKLI (158 aa)). The OBG-type G domain occupies 159 to 330 (ADVGLVGFPN…LLSYVSKRLK (172 aa)). Residues 165 to 172 (GFPNVGKS), 190 to 194 (FTTLT), 212 to 215 (DIPG), 282 to 285 (NKTD), and 311 to 313 (SAA) contribute to the GTP site. Mg(2+)-binding residues include S172 and T192. Positions 351 to 430 (KYEETEDKYH…MYSVEFEYFN (80 aa)) constitute an OCT domain.

This sequence belongs to the TRAFAC class OBG-HflX-like GTPase superfamily. OBG GTPase family. As to quaternary structure, monomer. Requires Mg(2+) as cofactor.

The protein resides in the cytoplasm. Functionally, an essential GTPase which binds GTP, GDP and possibly (p)ppGpp with moderate affinity, with high nucleotide exchange rates and a fairly low GTP hydrolysis rate. Plays a role in control of the cell cycle, stress response, ribosome biogenesis and in those bacteria that undergo differentiation, in morphogenesis control. This chain is GTPase Obg, found in Alkaliphilus oremlandii (strain OhILAs) (Clostridium oremlandii (strain OhILAs)).